The primary structure comprises 1432 residues: Gag-Pol polyprotein (1432 aa).

Residue Gly-2 is the site of N-myristoyl glycine; by host attachment. The tract at residues 7 to 31 (VLSGGKLDTWERIRLRPGGKKKYAL) is interaction with Gp41. An interaction with host CALM1 region spans residues 8–43 (LSGGKLDTWERIRLRPGGKKKYALKHLIWASRELER). The interaction with host AP3D1 stretch occupies residues 12–19 (KLDTWERI). The segment at 14-33 (DTWERIRLRPGGKKKYALKH) is interaction with membrane phosphatidylinositol 4,5-bisphosphate and RNA. Positions 16 to 22 (WERIRLR) match the Nuclear export signal motif. A Nuclear localization signal motif is present at residues 26–32 (KKKYALK). The interval 73 to 77 (EEIRS) is interaction with membrane phosphatidylinositol 4,5-bisphosphate. A disordered region spans residues 102-125 (EKMEEEQNKSKKKTQQAAADSSQV). Low complexity predominate over residues 116–125 (QQAAADSSQV). Phosphotyrosine; by host is present on Tyr-129. The segment at 186–224 (NTVGGHQAAMQMLKETINDEAAEWDRLHPVHAGPVAPGQ) is interaction with human PPIA/CYPA and NUP153. The segment at 274–360 (YSPVSILDIR…GGPGHKARVL (87 aa)) is dimerization/Multimerization of capsid protein p24. 2 CCHC-type zinc fingers span residues 388 to 405 (IKCFNCGKEGHTAKNCRA) and 409 to 426 (KGCWKCGREGHQMKDCTE). The tract at residues 486-490 (PQITL) is dimerization of protease. The Peptidase A2 domain maps to 505–574 (KEALLDTGAD…TPVNIIGRNL (70 aa)). Catalysis depends on Asp-510, which acts as the For protease activity; shared with dimeric partner. Dimerization of protease stretches follow at residues 534–540 (GIGGFIK) and 573–585 (NLLTQIGCTLNFP). The Reverse transcriptase domain maps to 628–818 (EGKISRIGPE…PPFLWMGYEL (191 aa)). The Mg(2+) site is built by Asp-694, Asp-769, and Asp-770. Positions 811-819 (FLWMGYELH) are RT 'primer grip'. The short motif at 982 to 998 (WETWWIEYWQATWIPEW) is the Tryptophan repeat motif element. An RNase H type-1 domain is found at 1018 to 1141 (IIGAETFYVD…VDKLVSQGIR (124 aa)). Mg(2+)-binding residues include Asp-1027, Glu-1062, Asp-1082, and Asp-1133. The Integrase-type zinc finger occupies 1147 to 1188 (DGIDKAQEEHEKYHNNWRAMASDFNLPPVVAKEIVASCDKCQ). Zn(2+) contacts are provided by His-1156, His-1160, Cys-1184, and Cys-1187. An Integrase catalytic domain is found at 1198 to 1348 (VDCSPGIWQL…SAGERIIDII (151 aa)). Asp-1208, Asp-1260, and Glu-1296 together coordinate Mg(2+). The integrase-type DNA-binding region spans 1367–1414 (FRVYYRDSRDPIWKGPAKLLWKGEGAVVIQDNSDIKVVPRRKVKIIRD).

In terms of assembly, homotrimer; further assembles as hexamers of trimers. Interacts with gp41 (via C-terminus). Interacts with host CALM1; this interaction induces a conformational change in the Matrix protein, triggering exposure of the myristate group. Interacts with host AP3D1; this interaction allows the polyprotein trafficking to multivesicular bodies during virus assembly. Part of the pre-integration complex (PIC) which is composed of viral genome, matrix protein, Vpr and integrase. Homodimer; the homodimer further multimerizes as homohexamers or homopentamers. Interacts with human PPIA/CYPA; This interaction stabilizes the capsid. Interacts with human NUP153. Interacts with host PDZD8; this interaction stabilizes the capsid. Interacts with monkey TRIM5; this interaction destabilizes the capsid. As to quaternary structure, homodimer, whose active site consists of two apposed aspartic acid residues. In terms of assembly, heterodimer of p66 RT and p51 RT (RT p66/p51). Heterodimerization of RT is essential for DNA polymerase activity. The overall folding of the subdomains is similar in p66 RT and p51 RT but the spatial arrangements of the subdomains are dramatically different. Homotetramer; may further associate as a homohexadecamer. Part of the pre-integration complex (PIC) which is composed of viral genome, matrix protein, Vpr and integrase. Interacts with human SMARCB1/INI1 and human PSIP1/LEDGF isoform 1. Interacts with human KPNA3; this interaction might play a role in nuclear import of the pre-integration complex. Interacts with human NUP153; this interaction might play a role in nuclear import of the pre-integration complex. Mg(2+) serves as cofactor. Post-translationally, specific enzymatic cleavages by the viral protease yield mature proteins. The protease is released by autocatalytic cleavage. The polyprotein is cleaved during and after budding, this process is termed maturation. Proteolytic cleavage of p66 RT removes the RNase H domain to yield the p51 RT subunit. Nucleocapsid protein p7 might be further cleaved after virus entry. In terms of processing, tyrosine phosphorylated presumably in the virion by a host kinase. Phosphorylation is apparently not a major regulator of membrane association. Phosphorylated possibly by host MAPK1; this phosphorylation is necessary for Pin1-mediated virion uncoating. Post-translationally, methylated by host PRMT6, impairing its function by reducing RNA annealing and the initiation of reverse transcription.

The protein resides in the host cell membrane. Its subcellular location is the host endosome. It is found in the host multivesicular body. It localises to the virion membrane. The protein localises to the host nucleus. The protein resides in the host cytoplasm. Its subcellular location is the virion. The catalysed reaction is Specific for a P1 residue that is hydrophobic, and P1' variable, but often Pro.. It carries out the reaction Endohydrolysis of RNA in RNA/DNA hybrids. Three different cleavage modes: 1. sequence-specific internal cleavage of RNA. Human immunodeficiency virus type 1 and Moloney murine leukemia virus enzymes prefer to cleave the RNA strand one nucleotide away from the RNA-DNA junction. 2. RNA 5'-end directed cleavage 13-19 nucleotides from the RNA end. 3. DNA 3'-end directed cleavage 15-20 nucleotides away from the primer terminus.. The enzyme catalyses 3'-end directed exonucleolytic cleavage of viral RNA-DNA hybrid.. It catalyses the reaction DNA(n) + a 2'-deoxyribonucleoside 5'-triphosphate = DNA(n+1) + diphosphate. Its activity is regulated as follows. The viral protease is inhibited by many synthetic protease inhibitors (PIs), such as amprenavir, atazanavir, indinavir, loprinavir, nelfinavir, ritonavir and saquinavir. RT can be inhibited either by nucleoside RT inhibitors (NRTIs) or by non nucleoside RT inhibitors (NNRTIs). NRTIs act as chain terminators, whereas NNRTIs inhibit DNA polymerization by binding a small hydrophobic pocket near the RT active site and inducing an allosteric change in this region. Classical NRTIs are abacavir, adefovir (PMEA), didanosine (ddI), lamivudine (3TC), stavudine (d4T), tenofovir (PMPA), zalcitabine (ddC), and zidovudine (AZT). Classical NNRTIs are atevirdine (BHAP U-87201E), delavirdine, efavirenz (DMP-266), emivirine (I-EBU), and nevirapine (BI-RG-587). The tritherapies used as a basic effective treatment of AIDS associate two NRTIs and one NNRTI. Use of protease inhibitors in tritherapy regimens permit more ambitious therapeutic strategies. In terms of biological role, gag-Pol polyprotein and Gag polyprotein may regulate their own translation, by the binding genomic RNA in the 5'-UTR. At low concentration, Gag-Pol and Gag would promote translation, whereas at high concentration, the polyproteins encapsidate genomic RNA and then shut off translation. Its function is as follows. Matrix protein p17 targets Gag and Gag-pol polyproteins to the plasma membrane via a multipartite membrane-binding signal, that includes its myristoylated N-terminus. Matrix protein is part of the pre-integration complex. Implicated in the release from host cell mediated by Vpu. Binds to RNA. Functionally, forms the conical core that encapsulates the genomic RNA-nucleocapsid complex in the virion. Most core are conical, with only 7% tubular. The core is constituted by capsid protein hexamer subunits. The core is disassembled soon after virion entry. Host restriction factors such as TRIM5-alpha or TRIMCyp bind retroviral capsids and cause premature capsid disassembly, leading to blocks in reverse transcription. Capsid restriction by TRIM5 is one of the factors which restricts HIV-1 to the human species. Host PIN1 apparently facilitates the virion uncoating. On the other hand, interactions with PDZD8 or CYPA stabilize the capsid. Nucleocapsid protein p7 encapsulates and protects viral dimeric unspliced genomic RNA (gRNA). Binds these RNAs through its zinc fingers. Acts as a nucleic acid chaperone which is involved in rearangement of nucleic acid secondary structure during gRNA retrotranscription. Also facilitates template switch leading to recombination. As part of the polyprotein, participates in gRNA dimerization, packaging, tRNA incorporation and virion assembly. In terms of biological role, the aspartyl protease mediates proteolytic cleavages of Gag and Gag-Pol polyproteins during or shortly after the release of the virion from the plasma membrane. Cleavages take place as an ordered, step-wise cascade to yield mature proteins. This process is called maturation. Displays maximal activity during the budding process just prior to particle release from the cell. Also cleaves Nef and Vif, probably concomitantly with viral structural proteins on maturation of virus particles. Hydrolyzes host EIF4GI and PABP1 in order to shut off the capped cellular mRNA translation. The resulting inhibition of cellular protein synthesis serves to ensure maximal viral gene expression and to evade host immune response. Also mediates cleavage of host YTHDF3. Mediates cleavage of host CARD8, thereby activating the CARD8 inflammasome, leading to the clearance of latent HIV-1 in patient CD4(+) T-cells after viral reactivation; in contrast, HIV-1 can evade CARD8-sensing when its protease remains inactive in infected cells prior to viral budding. Its function is as follows. Reverse transcriptase/ribonuclease H (RT) is a multifunctional enzyme that converts the viral RNA genome into dsDNA in the cytoplasm, shortly after virus entry into the cell. This enzyme displays a DNA polymerase activity that can copy either DNA or RNA templates, and a ribonuclease H (RNase H) activity that cleaves the RNA strand of RNA-DNA heteroduplexes in a partially processive 3' to 5' endonucleasic mode. Conversion of viral genomic RNA into dsDNA requires many steps. A tRNA(3)-Lys binds to the primer-binding site (PBS) situated at the 5'-end of the viral RNA. RT uses the 3' end of the tRNA primer to perform a short round of RNA-dependent minus-strand DNA synthesis. The reading proceeds through the U5 region and ends after the repeated (R) region which is present at both ends of viral RNA. The portion of the RNA-DNA heteroduplex is digested by the RNase H, resulting in a ssDNA product attached to the tRNA primer. This ssDNA/tRNA hybridizes with the identical R region situated at the 3' end of viral RNA. This template exchange, known as minus-strand DNA strong stop transfer, can be either intra- or intermolecular. RT uses the 3' end of this newly synthesized short ssDNA to perform the RNA-dependent minus-strand DNA synthesis of the whole template. RNase H digests the RNA template except for two polypurine tracts (PPTs) situated at the 5'-end and near the center of the genome. It is not clear if both polymerase and RNase H activities are simultaneous. RNase H probably can proceed both in a polymerase-dependent (RNA cut into small fragments by the same RT performing DNA synthesis) and a polymerase-independent mode (cleavage of remaining RNA fragments by free RTs). Secondly, RT performs DNA-directed plus-strand DNA synthesis using the PPTs that have not been removed by RNase H as primers. PPTs and tRNA primers are then removed by RNase H. The 3' and 5' ssDNA PBS regions hybridize to form a circular dsDNA intermediate. Strand displacement synthesis by RT to the PBS and PPT ends produces a blunt ended, linear dsDNA copy of the viral genome that includes long terminal repeats (LTRs) at both ends. Functionally, catalyzes viral DNA integration into the host chromosome, by performing a series of DNA cutting and joining reactions. This enzyme activity takes place after virion entry into a cell and reverse transcription of the RNA genome in dsDNA. The first step in the integration process is 3' processing. This step requires a complex comprising the viral genome, matrix protein, Vpr and integrase. This complex is called the pre-integration complex (PIC). The integrase protein removes 2 nucleotides from each 3' end of the viral DNA, leaving recessed CA OH's at the 3' ends. In the second step, the PIC enters cell nucleus. This process is mediated through integrase and Vpr proteins, and allows the virus to infect a non dividing cell. This ability to enter the nucleus is specific of lentiviruses, other retroviruses cannot and rely on cell division to access cell chromosomes. In the third step, termed strand transfer, the integrase protein joins the previously processed 3' ends to the 5' ends of strands of target cellular DNA at the site of integration. The 5'-ends are produced by integrase-catalyzed staggered cuts, 5 bp apart. A Y-shaped, gapped, recombination intermediate results, with the 5'-ends of the viral DNA strands and the 3' ends of target DNA strands remaining unjoined, flanking a gap of 5 bp. The last step is viral DNA integration into host chromosome. This involves host DNA repair synthesis in which the 5 bp gaps between the unjoined strands are filled in and then ligated. Since this process occurs at both cuts flanking the HIV genome, a 5 bp duplication of host DNA is produced at the ends of HIV-1 integration. Alternatively, Integrase may catalyze the excision of viral DNA just after strand transfer, this is termed disintegration. This Homo sapiens (Human) protein is Gag-Pol polyprotein (gag-pol).